The sequence spans 130 residues: MAQIKYYATGRRKTSVAKVWLSPGNGKIIVNDKNMEEYFPLETLRIIVKQPLTLTETLGKYDVIAKVKGGGLSGQAGAVRHGIARALVLADPTLRPVLKKAGFLTRDPRMVERKKYGLKKARRAPQFSKR.

The protein belongs to the universal ribosomal protein uS9 family.

In Caldicellulosiruptor bescii (strain ATCC BAA-1888 / DSM 6725 / KCTC 15123 / Z-1320) (Anaerocellum thermophilum), this protein is Small ribosomal subunit protein uS9.